Consider the following 97-residue polypeptide: Co-chaperonin GroES (97 aa).

It belongs to the GroES chaperonin family. In terms of assembly, heptamer of 7 subunits arranged in a ring. Interacts with the chaperonin GroEL.

Its subcellular location is the cytoplasm. In terms of biological role, together with the chaperonin GroEL, plays an essential role in assisting protein folding. The GroEL-GroES system forms a nano-cage that allows encapsulation of the non-native substrate proteins and provides a physical environment optimized to promote and accelerate protein folding. GroES binds to the apical surface of the GroEL ring, thereby capping the opening of the GroEL channel. The chain is Co-chaperonin GroES from Arthrobacter sp. (strain FB24).